Here is a 947-residue protein sequence, read N- to C-terminus: Bifunctional glutamine synthetase adenylyltransferase/adenylyl-removing enzyme (947 aa).

The segment at 1-440 is adenylyl removase; the sequence is MTPLSSPLSQ…VFNELIGDDE (440 aa). Positions 450–947 are adenylyl transferase; sequence SEPWREVWQD…ASWRKWLVAV (498 aa).

This sequence belongs to the GlnE family. Mg(2+) serves as cofactor.

It catalyses the reaction [glutamine synthetase]-O(4)-(5'-adenylyl)-L-tyrosine + phosphate = [glutamine synthetase]-L-tyrosine + ADP. The catalysed reaction is [glutamine synthetase]-L-tyrosine + ATP = [glutamine synthetase]-O(4)-(5'-adenylyl)-L-tyrosine + diphosphate. In terms of biological role, involved in the regulation of glutamine synthetase GlnA, a key enzyme in the process to assimilate ammonia. When cellular nitrogen levels are high, the C-terminal adenylyl transferase (AT) inactivates GlnA by covalent transfer of an adenylyl group from ATP to specific tyrosine residue of GlnA, thus reducing its activity. Conversely, when nitrogen levels are low, the N-terminal adenylyl removase (AR) activates GlnA by removing the adenylyl group by phosphorolysis, increasing its activity. The regulatory region of GlnE binds the signal transduction protein PII (GlnB) which indicates the nitrogen status of the cell. The chain is Bifunctional glutamine synthetase adenylyltransferase/adenylyl-removing enzyme from Salmonella paratyphi B (strain ATCC BAA-1250 / SPB7).